The sequence spans 92 residues: Em-like protein GEA6 (92 aa).

Basic and acidic residues-rich tracts occupy residues 1 to 18 and 37 to 51; these read MASQQEKKQLDERAKKGE and AEGRSRGGQTRKEQL. Residues 1–92 form a disordered region; sequence MASQQEKKQL…IDESKFRTKT (92 aa).

This sequence belongs to the small hydrophilic plant seed protein family. In terms of tissue distribution, present only in nearly dry and dry seeds.

Functionally, it is thought to provide protection for the cytoplasm during the desiccation stage of embryo development. The sequence is that of Em-like protein GEA6 (EM6) from Arabidopsis thaliana (Mouse-ear cress).